The following is a 351-amino-acid chain: Uroporphyrinogen decarboxylase (351 aa).

Substrate-binding positions include arginine 25 to arginine 29, phenylalanine 43, aspartate 74, tyrosine 151, serine 206, and histidine 325.

The protein belongs to the uroporphyrinogen decarboxylase family. In terms of assembly, homodimer.

The protein localises to the cytoplasm. The enzyme catalyses uroporphyrinogen III + 4 H(+) = coproporphyrinogen III + 4 CO2. The protein operates within porphyrin-containing compound metabolism; protoporphyrin-IX biosynthesis; coproporphyrinogen-III from 5-aminolevulinate: step 4/4. Functionally, catalyzes the decarboxylation of four acetate groups of uroporphyrinogen-III to yield coproporphyrinogen-III. In Chlorobaculum tepidum (strain ATCC 49652 / DSM 12025 / NBRC 103806 / TLS) (Chlorobium tepidum), this protein is Uroporphyrinogen decarboxylase.